The primary structure comprises 482 residues: MIDADVIVGLEVHCQLDTKSKLFCGCSTDYRDDGPNTHVCPICLGLPGTMPALNKRAIEYAMKVAKALNCTIVPESEFSRKNYFYPDLDKAYQITQYDKPLAQGGYVEIEGDDGKERKIQLTRIHVEEDPGRLVHMGNAERGRYSLVDYNRAGIPLIEIVSEPDMRSPKEARKFLNKLRATLEYLGVFDSEKEGSLRVDANISLRGNERVEVKNITSYKGVEKALTFEVTRQKNLIRRGLPVERETRHYLEARGITQSARSKETENDYRYFPEPDLRPLRVQSWVKDIALPELPDARRERFVTQYSCSLNHARTLTGELKMANFFEGVVSGDRAGLCSLAATWIADTLAGELNYRNMGIDCVDPHRFGSLLAILRAGTITDKSGVEVLRVMLDEQLKGETVETPEAIVARLNLAKTAGDDGALAAAVKEVISENPKAIEDYKAGKNGAINFLVGQVMKKTRGRADPGELNRLVVAALKDGGQ.

It belongs to the GatB/GatE family. GatB subfamily. As to quaternary structure, heterotrimer of A, B and C subunits.

The enzyme catalyses L-glutamyl-tRNA(Gln) + L-glutamine + ATP + H2O = L-glutaminyl-tRNA(Gln) + L-glutamate + ADP + phosphate + H(+). The catalysed reaction is L-aspartyl-tRNA(Asn) + L-glutamine + ATP + H2O = L-asparaginyl-tRNA(Asn) + L-glutamate + ADP + phosphate + 2 H(+). In terms of biological role, allows the formation of correctly charged Asn-tRNA(Asn) or Gln-tRNA(Gln) through the transamidation of misacylated Asp-tRNA(Asn) or Glu-tRNA(Gln) in organisms which lack either or both of asparaginyl-tRNA or glutaminyl-tRNA synthetases. The reaction takes place in the presence of glutamine and ATP through an activated phospho-Asp-tRNA(Asn) or phospho-Glu-tRNA(Gln). The protein is Aspartyl/glutamyl-tRNA(Asn/Gln) amidotransferase subunit B of Methanoregula boonei (strain DSM 21154 / JCM 14090 / 6A8).